Consider the following 304-residue polypeptide: Homoserine dehydrogenase (304 aa).

Residues Tyr8, Asn10, Val11, Arg38, Arg39, and Ser73 each contribute to the NADP(+) site. Tyr8 lines the NADPH pocket. Residues Val11 and Arg38 each contribute to the NADPH site. Val11 is a binding site for NAD(+). NADPH is bound by residues Ser73, Ser74, Thr100, and Lys102. Ser73 is an NAD(+) binding site. Residues Thr100 and Lys102 each coordinate NADP(+). The Na(+) site is built by Val129 and Thr133. NADP(+) contacts are provided by Gly182 and Glu185. Glu185 and Asp196 together coordinate L-homoserine. Lys200 serves as the catalytic Proton donor. Gly284 provides a ligand contact to NADP(+). Gly284 contacts NADPH. Residue Gly284 participates in NAD(+) binding.

The protein belongs to the homoserine dehydrogenase family. In terms of assembly, homodimer. Requires a metal cation as cofactor. Post-translationally, the enzyme is activated by reductive cleavage of the interchain disulfide bond between the two subunits.

It carries out the reaction L-homoserine + NADP(+) = L-aspartate 4-semialdehyde + NADPH + H(+). It catalyses the reaction L-homoserine + NAD(+) = L-aspartate 4-semialdehyde + NADH + H(+). It functions in the pathway amino-acid biosynthesis; L-methionine biosynthesis via de novo pathway; L-homoserine from L-aspartate: step 3/3. The protein operates within amino-acid biosynthesis; L-threonine biosynthesis; L-threonine from L-aspartate: step 3/5. With respect to regulation, inhibited by cysteine. Its function is as follows. Catalyzes the conversion of L-aspartate-beta-semialdehyde (L-Asa) to L-homoserine (L-Hse), the third step in the biosynthesis of threonine and methionine from aspartate. The polypeptide is Homoserine dehydrogenase (Sulfurisphaera tokodaii (strain DSM 16993 / JCM 10545 / NBRC 100140 / 7) (Sulfolobus tokodaii)).